An 801-amino-acid chain; its full sequence is N,N'-diacetylchitobiose phosphorylase (801 aa).

N-acetyl-alpha-D-glucosamine 1-phosphate is bound by residues R333, R343, R349, D350, W490, and D492. D492 (proton donor) is an active-site residue. N-acetyl-D-glucosamine contacts are provided by D492, K636, and E637. Residues E637, H644, Q690, T709, and G710 each contribute to the N-acetyl-alpha-D-glucosamine 1-phosphate site.

The protein belongs to the glycosyl hydrolase 94 family. Homodimer.

It catalyses the reaction N,N'-diacetylchitobiose + phosphate = N-acetyl-alpha-D-glucosamine 1-phosphate + N-acetyl-D-glucosamine. In terms of biological role, catalyzes the reversible phosphorolysis of chitobiose (N,N'-diacetylchitobiose or (GlcNAc)(2)) into N-acetyl-alpha-D-glucosamine 1-phosphate (GlcNAc-1-P) and N-acetyl-D-glucosamine (GlcNAc) with inversion of the anomeric configuration. In the synthetic reaction, is also active on glucose-1-phosphate with 10% activity as compared with that on GlcNAc-1-P. GlcNAc is the best acceptor substrate, but the enzyme can use aryl-beta-glycosides of GlcNAc as the acceptor substrate with 10-20% activities of GlcNAc. Shows no phosphorolytic activity on cellobiose. The polypeptide is N,N'-diacetylchitobiose phosphorylase (Vibrio proteolyticus (Aeromonas proteolytica)).